A 177-amino-acid polypeptide reads, in one-letter code: Inorganic pyrophosphatase (177 aa).

Substrate-binding residues include K31, R45, and Y57. Mg(2+) is bound by residues D67, D72, and D104. Y142 lines the substrate pocket.

This sequence belongs to the PPase family. In terms of assembly, homohexamer. It depends on Mg(2+) as a cofactor.

The protein localises to the cytoplasm. It carries out the reaction diphosphate + H2O = 2 phosphate + H(+). In terms of biological role, catalyzes the hydrolysis of inorganic pyrophosphate (PPi) forming two phosphate ions. In Neisseria meningitidis serogroup B (strain ATCC BAA-335 / MC58), this protein is Inorganic pyrophosphatase.